The chain runs to 299 residues: 4-diphosphocytidyl-2-C-methyl-D-erythritol kinase (299 aa).

Residue Lys-33 is part of the active site. 115–125 is an ATP binding site; the sequence is PLASGLGGGSS. The active site involves Asp-154.

Belongs to the GHMP kinase family. IspE subfamily.

The enzyme catalyses 4-CDP-2-C-methyl-D-erythritol + ATP = 4-CDP-2-C-methyl-D-erythritol 2-phosphate + ADP + H(+). It functions in the pathway isoprenoid biosynthesis; isopentenyl diphosphate biosynthesis via DXP pathway; isopentenyl diphosphate from 1-deoxy-D-xylulose 5-phosphate: step 3/6. Its function is as follows. Catalyzes the phosphorylation of the position 2 hydroxy group of 4-diphosphocytidyl-2C-methyl-D-erythritol. The sequence is that of 4-diphosphocytidyl-2-C-methyl-D-erythritol kinase from Deinococcus geothermalis (strain DSM 11300 / CIP 105573 / AG-3a).